The primary structure comprises 238 residues: tRNA (guanine-N(7)-)-methyltransferase (238 aa).

4 residues coordinate S-adenosyl-L-methionine: Glu70, Asp95, Asp122, and Asp145. Asp145 is a catalytic residue. Residues Lys149, Asp181, and 216–219 (TKFE) each bind substrate.

This sequence belongs to the class I-like SAM-binding methyltransferase superfamily. TrmB family.

The enzyme catalyses guanosine(46) in tRNA + S-adenosyl-L-methionine = N(7)-methylguanosine(46) in tRNA + S-adenosyl-L-homocysteine. It functions in the pathway tRNA modification; N(7)-methylguanine-tRNA biosynthesis. In terms of biological role, catalyzes the formation of N(7)-methylguanine at position 46 (m7G46) in tRNA. This Neisseria meningitidis serogroup C / serotype 2a (strain ATCC 700532 / DSM 15464 / FAM18) protein is tRNA (guanine-N(7)-)-methyltransferase.